The sequence spans 267 residues: Regulatory protein VirG (267 aa).

Positions 29–143 (HVLLVDDDVA…EFLARIRVAL (115 aa)) constitute a Response regulatory domain. Position 78 is a 4-aspartylphosphate (Asp78). A DNA-binding region (ompR/PhoB-type) is located at residues 155-255 (RRSFCFTDWT…ARGAGYFFDA (101 aa)).

Phosphorylated by wide host range (WHR) VirA protein.

It localises to the cytoplasm. Its function is as follows. VirG is required for the positive regulation of at least two vir loci encoded by the Ti plasmid of A.tumefaciens. This Rhizobium radiobacter (Agrobacterium tumefaciens) protein is Regulatory protein VirG (virG).